Reading from the N-terminus, the 281-residue chain is Probable endonuclease 4 (281 aa).

Histidine 69, histidine 109, glutamate 145, aspartate 179, histidine 182, histidine 216, aspartate 229, histidine 231, and glutamate 261 together coordinate Zn(2+).

This sequence belongs to the AP endonuclease 2 family. Zn(2+) is required as a cofactor.

The catalysed reaction is Endonucleolytic cleavage to 5'-phosphooligonucleotide end-products.. Its function is as follows. Endonuclease IV plays a role in DNA repair. It cleaves phosphodiester bonds at apurinic or apyrimidinic (AP) sites, generating a 3'-hydroxyl group and a 5'-terminal sugar phosphate. This is Probable endonuclease 4 from Pectobacterium carotovorum subsp. carotovorum (strain PC1).